Reading from the N-terminus, the 481-residue chain is Protein nucleotidyltransferase YdiU (481 aa).

ATP contacts are provided by Gly-85, Gly-87, Arg-88, Lys-108, Asp-120, Gly-121, Arg-172, and Arg-179. Asp-248 serves as the catalytic Proton acceptor. Residues Asn-249 and Asp-258 each contribute to the Mg(2+) site. Position 258 (Asp-258) interacts with ATP.

Belongs to the SELO family. Mg(2+) serves as cofactor. It depends on Mn(2+) as a cofactor.

It carries out the reaction L-seryl-[protein] + ATP = 3-O-(5'-adenylyl)-L-seryl-[protein] + diphosphate. The catalysed reaction is L-threonyl-[protein] + ATP = 3-O-(5'-adenylyl)-L-threonyl-[protein] + diphosphate. It catalyses the reaction L-tyrosyl-[protein] + ATP = O-(5'-adenylyl)-L-tyrosyl-[protein] + diphosphate. The enzyme catalyses L-histidyl-[protein] + UTP = N(tele)-(5'-uridylyl)-L-histidyl-[protein] + diphosphate. It carries out the reaction L-seryl-[protein] + UTP = O-(5'-uridylyl)-L-seryl-[protein] + diphosphate. The catalysed reaction is L-tyrosyl-[protein] + UTP = O-(5'-uridylyl)-L-tyrosyl-[protein] + diphosphate. In terms of biological role, nucleotidyltransferase involved in the post-translational modification of proteins. It can catalyze the addition of adenosine monophosphate (AMP) or uridine monophosphate (UMP) to a protein, resulting in modifications known as AMPylation and UMPylation. The polypeptide is Protein nucleotidyltransferase YdiU (Cereibacter sphaeroides (strain ATCC 17029 / ATH 2.4.9) (Rhodobacter sphaeroides)).